The chain runs to 541 residues: Halolysin-like extracellular serine protease Nep (541 aa).

Positions 1 to 33 (MTRDTNSNVGRRSVLKAASALGAFLGLGGVASA) form a signal peptide, tat-type signal. A propeptide spanning residues 34 to 121 (TPGREPGPKK…DNATYETLEV (88 aa)) is cleaved from the precursor. In terms of domain architecture, Peptidase S8 spans 130-405 (QYAPQQVNCE…YGRVDAELAV (276 aa)). Active-site charge relay system residues include aspartate 157, histidine 198, and serine 351. Residues 403–453 (LAVTTDPDNGDDDDDDDDDEDDPGDGECGDETNTATADGELSGGWGGNPSD) form a disordered region. The span at 410–432 (DNGDDDDDDDDDEDDPGDGECGD) shows a compositional bias: acidic residues.

It belongs to the peptidase S8 family. Monomer. Post-translationally, exported by the Tat system. The position of the signal peptide cleavage has not been experimentally proven. After transport across the membrane, the propeptide is probably processed autocatalytically, yielding the mature fully active protease.

Its subcellular location is the secreted. Its activity is regulated as follows. Dependent on high salt concentrations for activity and stability. Strongly inhibited by the serine protease inhibitors diisopropyl fluorophosphate (DFP), phenylmethyl sulfonylfluoride (PMSF) and chymostatin. Also inhibited by denaturing agents such as SDS, urea, and HCl guanidinium. Activated by thiol-containing reducing agents such as dithiotreitol (DTT) and 2-mercaptoethanol. Its function is as follows. Serine protease that hydrolyzes large proteins such as casein and gelatin. Cleaves preferentially at the carboxyl terminus of Phe, Tyr or Leu. Is also able to catalyze peptide synthesis under different salt concentrations in the presence of dimethyl sulfoxide (DMSO). In Natrialba magadii, this protein is Halolysin-like extracellular serine protease Nep.